We begin with the raw amino-acid sequence, 333 residues long: uncharacterized protein (333 aa).

Residues 94–122 (NLYREVWRELEEEQNKVEKLREYILKLDS) adopt a coiled-coil conformation.

This is an uncharacterized protein from Aquifex aeolicus (strain VF5).